The sequence spans 213 residues: MKPYQRQFIEFALNKQVLKFGEFTLKSGRKSPYFFNAGLFNTGRDLALLGRFYAEALVDSGIEFDLLFGPAYKGIPIATTTAVALAEHHDKDLPYCFNRKEAKDHGEGGSLVGSALQGRVMLVDDVITAGTAIRESMEIIQAHGATLAGVLISLDRQERGRGEISAIQEVERDYGCKVISIITLKDLIAYLEEKPDMAEHLAAVRAYREEFGV.

Lysine 26 contacts 5-phospho-alpha-D-ribose 1-diphosphate. 34–35 provides a ligand contact to orotate; the sequence is FF. 5-phospho-alpha-D-ribose 1-diphosphate is bound by residues 72 to 73, arginine 99, lysine 100, lysine 103, histidine 105, and 124 to 132; these read YK and DDVITAGTA. Orotate-binding residues include threonine 128 and arginine 156.

It belongs to the purine/pyrimidine phosphoribosyltransferase family. PyrE subfamily. Homodimer. The cofactor is Mg(2+).

The enzyme catalyses orotidine 5'-phosphate + diphosphate = orotate + 5-phospho-alpha-D-ribose 1-diphosphate. It functions in the pathway pyrimidine metabolism; UMP biosynthesis via de novo pathway; UMP from orotate: step 1/2. Functionally, catalyzes the transfer of a ribosyl phosphate group from 5-phosphoribose 1-diphosphate to orotate, leading to the formation of orotidine monophosphate (OMP). The protein is Orotate phosphoribosyltransferase of Salmonella choleraesuis (strain SC-B67).